The following is a 380-amino-acid chain: Palmitoyltransferase ZDHHC18 (380 aa).

The segment at methionine 1 to arginine 59 is disordered. Residues methionine 1 to histidine 82 are Cytoplasmic-facing. Serine 19 carries the phosphoserine modification. Positions proline 27–glycine 40 are enriched in pro residues. The chain crosses the membrane as a helical span at residues glycine 83–phenylalanine 103. Topologically, residues aspartate 104–threonine 111 are lumenal. Residues leucine 112–leucine 132 form a helical membrane-spanning segment. The Cytoplasmic segment spans residues glutamine 133 to arginine 227. One can recognise a DHHC domain in the interval lysine 184 to leucine 234. Cysteine 214 acts as the S-palmitoyl cysteine intermediate in catalysis. Residues phenylalanine 228–valine 248 form a helical membrane-spanning segment. Topologically, residues threonine 249–alanine 269 are lumenal. A helical membrane pass occupies residues serine 270–phenylalanine 290. Over histidine 291–proline 380 the chain is Cytoplasmic. The segment at alanine 355–proline 380 is disordered.

Belongs to the DHHC palmitoyltransferase family. ERF2/ZDHHC9 subfamily. Ubiquitously expressed.

Its subcellular location is the golgi apparatus membrane. It carries out the reaction L-cysteinyl-[protein] + hexadecanoyl-CoA = S-hexadecanoyl-L-cysteinyl-[protein] + CoA. Its function is as follows. Palmitoyltransferase that catalyzes the addition of palmitate onto various protein substrates, such as CGAS, HRAS and LCK. Palmitoylates HRAS and LCK. Acts as a negative regulator of the cGAS-STING pathway be mediating palmitoylation and inactivation of CGAS. May also have a palmitoyltransferase activity toward the beta-2 adrenergic receptor/ADRB2 and therefore regulate G protein-coupled receptor signaling. The protein is Palmitoyltransferase ZDHHC18 of Mus musculus (Mouse).